Consider the following 227-residue polypeptide: UPF0173 metal-dependent hydrolase BCE33L4354 (227 aa).

The protein belongs to the UPF0173 family.

This Bacillus cereus (strain ZK / E33L) protein is UPF0173 metal-dependent hydrolase BCE33L4354.